Reading from the N-terminus, the 661-residue chain is Sperm transmembrane protein 9 (661 aa).

A signal peptide spans 1 to 16; the sequence is MNVILVLVVLFFAGDC. Topologically, residues 17–618 are extracellular; the sequence is AKIRKIIDFL…MTNRLMKNYE (602 aa). One can recognise an EGF-like 1 domain in the interval 52–90; sequence NFNPCLENPKICSNRGKCLHENGNFYCICPVTHYGKTCE. 3 cysteine pairs are disulfide-bonded: Cys-56/Cys-69, Cys-63/Cys-78, and Cys-80/Cys-89. Asn-105, Asn-106, Asn-134, and Asn-190 each carry an N-linked (GlcNAc...) asparagine glycan. Residues 210–259 form the EGF-like 2 domain; it reads QISACFDTQCDNGGICEDVVDWKTKTVTATCKCPSAIELIGGTVTGENCE. 3 disulfide bridges follow: Cys-214-Cys-225, Cys-219-Cys-240, and Cys-242-Cys-258. N-linked (GlcNAc...) asparagine glycans are attached at residues Asn-279, Asn-290, Asn-316, and Asn-338. Residues 377–379 carry the Cell attachment site motif; the sequence is RGD. EGF-like domains lie at 377–414, 519–557, and 559–600; these read RGDRWDEKCTDSQHGACVDISGVAHCVCKPDYTGEKCE, HTNPCYQNLCQNSATCHIDPKQRSYDCQCVNGTRGSLCE, and VDDS…LDCN. Disulfide bonds link Cys-385-Cys-402, Cys-393-Cys-404, Cys-413-Cys-419, Cys-523-Cys-534, Cys-528-Cys-545, Cys-547-Cys-556, Cys-563-Cys-576, Cys-571-Cys-588, and Cys-590-Cys-599. A glycan (N-linked (GlcNAc...) asparagine) is linked at Asn-549. A helical membrane pass occupies residues 619-639; sequence FSLPLVACFVSLAILLPVIVI. The Cytoplasmic portion of the chain corresponds to 640–661; sequence SRRRQGRVEEAKKTSEVKTENP.

In terms of tissue distribution, expressed in spermatids, during spermogenesis expression is primarily localized to the pseudopod.

It localises to the cytoplasm. Its subcellular location is the membrane. Functionally, required for fertilization. May be required for cell adhesion and/or function as a signaling molecule. The sequence is that of Sperm transmembrane protein 9 (spe-9) from Caenorhabditis elegans.